Here is a 365-residue protein sequence, read N- to C-terminus: Phospho-N-acetylmuramoyl-pentapeptide-transferase (365 aa).

10 consecutive transmembrane segments (helical) span residues 2-22 (ISLI…TPLL), 51-71 (TLGG…SALY), 80-100 (PSWS…LGFI), 118-138 (GKFI…LILP), 167-187 (VAIV…TNAI), 196-216 (LAAG…FWEF), 234-254 (PLDL…FLWY), 256-276 (SNPA…GLFA), 277-297 (AMSI…LFVI), and 340-360 (FWMI…GDWV).

The protein belongs to the glycosyltransferase 4 family. MraY subfamily. The cofactor is Mg(2+).

The protein localises to the cell membrane. It carries out the reaction UDP-N-acetyl-alpha-D-muramoyl-L-alanyl-gamma-D-glutamyl-meso-2,6-diaminopimeloyl-D-alanyl-D-alanine + di-trans,octa-cis-undecaprenyl phosphate = di-trans,octa-cis-undecaprenyl diphospho-N-acetyl-alpha-D-muramoyl-L-alanyl-D-glutamyl-meso-2,6-diaminopimeloyl-D-alanyl-D-alanine + UMP. It functions in the pathway cell wall biogenesis; peptidoglycan biosynthesis. Functionally, catalyzes the initial step of the lipid cycle reactions in the biosynthesis of the cell wall peptidoglycan: transfers peptidoglycan precursor phospho-MurNAc-pentapeptide from UDP-MurNAc-pentapeptide onto the lipid carrier undecaprenyl phosphate, yielding undecaprenyl-pyrophosphoryl-MurNAc-pentapeptide, known as lipid I. The polypeptide is Phospho-N-acetylmuramoyl-pentapeptide-transferase (Bifidobacterium adolescentis (strain ATCC 15703 / DSM 20083 / NCTC 11814 / E194a)).